The following is a 335-amino-acid chain: Mitochondrial amidoxime reducing component 2 (335 aa).

Residues 1 to 35 constitute a mitochondrion transit peptide; it reads MGASSSSALARLGLPAQARPRWLGVAVLGLAAVAL. Glycyl lysine isopeptide (Lys-Gly) (interchain with G-Cter in ubiquitin) cross-links involve residues lysine 59, lysine 138, and lysine 144. The residue at position 156 (lysine 156) is an N6-acetyllysine; alternate. Lysine 156 is covalently cross-linked (Glycyl lysine isopeptide (Lys-Gly) (interchain with G-Cter in ubiquitin); alternate). Residues lysine 173, lysine 187, lysine 287, and lysine 294 each participate in a glycyl lysine isopeptide (Lys-Gly) (interchain with G-Cter in ubiquitin) cross-link. One can recognise an MOSC domain in the interval 188 to 334; it reads GRTSRKLLPT…LRVGDPVYRM (147 aa).

As to quaternary structure, component of a complex composed of cytochrome b5, NADH-cytochrome b5 reductase (CYB5R3) and MTARC2. It depends on Mo-molybdopterin as a cofactor. Ubiquitinated by PRKN during mitophagy, leading to its degradation and enhancement of mitophagy. Deubiquitinated by USP30.

Its subcellular location is the mitochondrion outer membrane. The protein resides in the peroxisome. It carries out the reaction N(omega)-hydroxy-L-arginine + 2 Fe(II)-[cytochrome b5] + 2 H(+) = L-arginine + 2 Fe(III)-[cytochrome b5] + H2O. Functionally, catalyzes the reduction of N-oxygenated molecules, acting as a counterpart of cytochrome P450 and flavin-containing monooxygenases in metabolic cycles. As a component of prodrug-converting system, reduces a multitude of N-hydroxylated prodrugs particularly amidoximes, leading to increased drug bioavailability. May be involved in mitochondrial N(omega)-hydroxy-L-arginine (NOHA) reduction, regulating endogenous nitric oxide levels and biosynthesis. Postulated to cleave the N-OH bond of N-hydroxylated substrates in concert with electron transfer from NADH to cytochrome b5 reductase then to cytochrome b5, the ultimate electron donor that primes the active site for substrate reduction. This Macaca fascicularis (Crab-eating macaque) protein is Mitochondrial amidoxime reducing component 2 (MTARC2).